Consider the following 276-residue polypeptide: Hydroxyethylthiazole kinase (276 aa).

A substrate-binding site is contributed by M48. ATP contacts are provided by R124 and T175. G202 serves as a coordination point for substrate.

This sequence belongs to the Thz kinase family. It depends on Mg(2+) as a cofactor.

The catalysed reaction is 5-(2-hydroxyethyl)-4-methylthiazole + ATP = 4-methyl-5-(2-phosphooxyethyl)-thiazole + ADP + H(+). The protein operates within cofactor biosynthesis; thiamine diphosphate biosynthesis; 4-methyl-5-(2-phosphoethyl)-thiazole from 5-(2-hydroxyethyl)-4-methylthiazole: step 1/1. Functionally, catalyzes the phosphorylation of the hydroxyl group of 4-methyl-5-beta-hydroxyethylthiazole (THZ). The protein is Hydroxyethylthiazole kinase of Clostridium beijerinckii (strain ATCC 51743 / NCIMB 8052) (Clostridium acetobutylicum).